The primary structure comprises 85 residues: uncharacterized protein (85 aa).

Its subcellular location is the mitochondrion. This is an uncharacterized protein from Paramecium tetraurelia.